The chain runs to 439 residues: Ribosomal protein uS12 methylthiotransferase RimO (439 aa).

The region spanning 2–114 (SKLYLMSLGC…IDEMILKKTN (113 aa)) is the MTTase N-terminal domain. [4Fe-4S] cluster is bound by residues Cys-11, Cys-45, Cys-77, Cys-146, Cys-150, and Cys-153. The region spanning 132–363 (TGSNSHAFIK…VDEVIEKSFE (232 aa)) is the Radical SAM core domain.

This sequence belongs to the methylthiotransferase family. RimO subfamily. Requires [4Fe-4S] cluster as cofactor.

It is found in the cytoplasm. It catalyses the reaction L-aspartate(89)-[ribosomal protein uS12]-hydrogen + (sulfur carrier)-SH + AH2 + 2 S-adenosyl-L-methionine = 3-methylsulfanyl-L-aspartate(89)-[ribosomal protein uS12]-hydrogen + (sulfur carrier)-H + 5'-deoxyadenosine + L-methionine + A + S-adenosyl-L-homocysteine + 2 H(+). Catalyzes the methylthiolation of an aspartic acid residue of ribosomal protein uS12. This Campylobacter jejuni subsp. jejuni serotype O:2 (strain ATCC 700819 / NCTC 11168) protein is Ribosomal protein uS12 methylthiotransferase RimO.